The chain runs to 198 residues: Probable GTP-binding protein EngB (198 aa).

An EngB-type G domain is found at 21 to 195 (NFSEVAFLGR…EDIIINQTLG (175 aa)). GTP contacts are provided by residues 29–36 (GRSNVGKS), 56–60 (GKTQL), 81–84 (DLPG), 151–154 (TKCD), and 174–176 (VSN). The Mg(2+) site is built by Ser36 and Thr58.

This sequence belongs to the TRAFAC class TrmE-Era-EngA-EngB-Septin-like GTPase superfamily. EngB GTPase family. Mg(2+) serves as cofactor.

Functionally, necessary for normal cell division and for the maintenance of normal septation. This chain is Probable GTP-binding protein EngB, found in Campylobacter jejuni subsp. jejuni serotype O:23/36 (strain 81-176).